The sequence spans 182 residues: Crossover junction endodeoxyribonuclease RuvC (182 aa).

Active-site residues include D7, E69, and D141. The Mg(2+) site is built by D7, E69, and D141.

The protein belongs to the RuvC family. As to quaternary structure, homodimer which binds Holliday junction (HJ) DNA. The HJ becomes 2-fold symmetrical on binding to RuvC with unstacked arms; it has a different conformation from HJ DNA in complex with RuvA. In the full resolvosome a probable DNA-RuvA(4)-RuvB(12)-RuvC(2) complex forms which resolves the HJ. Requires Mg(2+) as cofactor.

The protein localises to the cytoplasm. The catalysed reaction is Endonucleolytic cleavage at a junction such as a reciprocal single-stranded crossover between two homologous DNA duplexes (Holliday junction).. In terms of biological role, the RuvA-RuvB-RuvC complex processes Holliday junction (HJ) DNA during genetic recombination and DNA repair. Endonuclease that resolves HJ intermediates. Cleaves cruciform DNA by making single-stranded nicks across the HJ at symmetrical positions within the homologous arms, yielding a 5'-phosphate and a 3'-hydroxyl group; requires a central core of homology in the junction. The consensus cleavage sequence is 5'-(A/T)TT(C/G)-3'. Cleavage occurs on the 3'-side of the TT dinucleotide at the point of strand exchange. HJ branch migration catalyzed by RuvA-RuvB allows RuvC to scan DNA until it finds its consensus sequence, where it cleaves and resolves the cruciform DNA. In Delftia acidovorans (strain DSM 14801 / SPH-1), this protein is Crossover junction endodeoxyribonuclease RuvC.